A 447-amino-acid polypeptide reads, in one-letter code: 26S proteasome non-ATPase regulatory subunit 12 (447 aa).

A disordered region spans residues 1-23 (MTIGLEPAVSSKTKDKMEQDLSP). The PCI domain occupies 240-411 (NYIEIARCYL…GIATFTTTND (172 aa)).

Belongs to the proteasome subunit p55 family.

Acts as a regulatory subunit of the 26S proteasome which is involved in the ATP-dependent degradation of ubiquitinated proteins. The sequence is that of 26S proteasome non-ATPase regulatory subunit 12 (psmD12) from Dictyostelium discoideum (Social amoeba).